Consider the following 76-residue polypeptide: UPF0291 protein BT9727_1737 (76 aa).

Belongs to the UPF0291 family.

The protein localises to the cytoplasm. The protein is UPF0291 protein BT9727_1737 of Bacillus thuringiensis subsp. konkukian (strain 97-27).